The sequence spans 374 residues: tRNA-specific 2-thiouridylase MnmA (374 aa).

ATP contacts are provided by residues 15 to 22 (GMSGGVDS) and M41. Residues 101–103 (NPD) form an interaction with target base in tRNA region. C106 (nucleophile) is an active-site residue. The cysteines at positions 106 and 203 are disulfide-linked. Residue G130 coordinates ATP. An interaction with tRNA region spans residues 153–155 (KDQ). C203 acts as the Cysteine persulfide intermediate in catalysis. Residues 311-312 (RY) form an interaction with tRNA region.

This sequence belongs to the MnmA/TRMU family.

It localises to the cytoplasm. The enzyme catalyses S-sulfanyl-L-cysteinyl-[protein] + uridine(34) in tRNA + AH2 + ATP = 2-thiouridine(34) in tRNA + L-cysteinyl-[protein] + A + AMP + diphosphate + H(+). Its function is as follows. Catalyzes the 2-thiolation of uridine at the wobble position (U34) of tRNA, leading to the formation of s(2)U34. In Lysinibacillus sphaericus (strain C3-41), this protein is tRNA-specific 2-thiouridylase MnmA.